A 244-amino-acid chain; its full sequence is Small ribosomal subunit protein eS6 (244 aa).

Residues 185 to 244 form a disordered region; it reads RLQRKRHMRAVKRRRYAKQREEEATYAKLLAKRKKEEREAHAKRRSSARESSLRESKSKA. The segment covering 186–201 has biased composition (basic residues); that stretch reads LQRKRHMRAVKRRRYA. A compositionally biased stretch (basic and acidic residues) spans 231–244; the sequence is SARESSLRESKSKA.

It belongs to the eukaryotic ribosomal protein eS6 family. Ribosomal protein S6 is the major substrate of protein kinases in eukaryote ribosomes.

Its function is as follows. Component of the 40S small ribosomal subunit. Plays an important role in controlling cell growth and proliferation through the selective translation of particular classes of mRNA. This Branchiostoma floridae (Florida lancelet) protein is Small ribosomal subunit protein eS6 (RPS6).